The chain runs to 315 residues: Tetratricopeptide repeat protein 23-like (315 aa).

Residues 28–56 (KIPEHQRTDESSPTSGSEESEEDTKAKEK) form a disordered region. Coiled coils occupy residues 65 to 90 (REKLAQSQKKIAQLIKGKKNIEANKE), 179 to 200 (REAYFNLQKSERNMKELRESYK), and 250 to 280 (SELVSLYQEIAQIEQLRRNHEQAIQYLHQAH).

It localises to the cytoplasm. The protein localises to the cytoskeleton. The protein resides in the microtubule organizing center. It is found in the centrosome. Its subcellular location is the spindle. It localises to the midbody. The sequence is that of Tetratricopeptide repeat protein 23-like (TTC23L) from Bos taurus (Bovine).